Consider the following 504-residue polypeptide: Glutamate--tRNA ligase (504 aa).

The 'HIGH' region motif lies at 25 to 35; the sequence is PSPTGNPHVGL. Residues cysteine 122, cysteine 124, cysteine 149, and glutamate 151 each contribute to the Zn(2+) site. The short motif at 270 to 274 is the 'KMSKS' region element; it reads KLSKR. ATP is bound at residue lysine 273.

It belongs to the class-I aminoacyl-tRNA synthetase family. Glutamate--tRNA ligase type 1 subfamily. As to quaternary structure, monomer. Zn(2+) is required as a cofactor.

The protein resides in the cytoplasm. It catalyses the reaction tRNA(Glu) + L-glutamate + ATP = L-glutamyl-tRNA(Glu) + AMP + diphosphate. In terms of biological role, catalyzes the attachment of glutamate to tRNA(Glu) in a two-step reaction: glutamate is first activated by ATP to form Glu-AMP and then transferred to the acceptor end of tRNA(Glu). This Streptomyces avermitilis (strain ATCC 31267 / DSM 46492 / JCM 5070 / NBRC 14893 / NCIMB 12804 / NRRL 8165 / MA-4680) protein is Glutamate--tRNA ligase.